The primary structure comprises 229 residues: MTVVTLGELLDAGVHFGHQASRWNPKMFPYIYAERNGIHVIDLVQTARLLTHAYEFVQKASQEKKSFLFVGTKRQAASIIAEEAQRCGGHYVNNRWLGGILTNWSTVQKRVEYLKELDAKEEDGTLDRLPKKEAAFLRREQEKLSHNLRGLINMTQIPDIVILVDPKRETTALLECRKLGIPIISILDTNCDPNLVDIPIPANDDAVRSVKLIISTLADGILEGKQSYQ.

Belongs to the universal ribosomal protein uS2 family.

Its subcellular location is the plastid. It localises to the chloroplast. The sequence is that of Small ribosomal subunit protein uS2c (rps2) from Emiliania huxleyi (Coccolithophore).